Here is a 226-residue protein sequence, read N- to C-terminus: Probable amino-acid ABC transporter permease protein YckA (226 aa).

Residues 27–215 (IGYTLLISFV…AICSIAAVFQ (189 aa)) form the ABC transmembrane type-1 domain. 5 helical membrane-spanning segments follow: residues 31 to 51 (LLIS…ISLA), 73 to 93 (VPIL…GIEF), 94 to 114 (SAVT…IAEI), 160 to 180 (VLLD…PELL), and 194 to 214 (MTMY…AAVF).

This sequence belongs to the binding-protein-dependent transport system permease family. HisMQ subfamily.

Its subcellular location is the cell membrane. Part of a binding-protein-dependent transport system. Probably responsible for the translocation of the substrate across the membrane. The polypeptide is Probable amino-acid ABC transporter permease protein YckA (yckA) (Bacillus subtilis (strain 168)).